A 193-amino-acid chain; its full sequence is Oocyte-secreted protein 3 (193 aa).

Residues 1-22 form the signal peptide; it reads MKDFVRLQSSFLLCTILTLSEQ. Residues Asn64, Asn130, Asn148, Asn151, Asn165, and Asn178 are each glycosylated (N-linked (GlcNAc...) asparagine).

This sequence belongs to the PLAC1 family.

Its subcellular location is the secreted. The polypeptide is Oocyte-secreted protein 3 (Homo sapiens (Human)).